The following is a 281-amino-acid chain: NADH-quinone oxidoreductase subunit B (281 aa).

Residues cysteine 37, cysteine 38, cysteine 103, and cysteine 132 each coordinate [4Fe-4S] cluster. Positions aspartate 242–proline 281 are disordered. Residues threonine 257–proline 281 are compositionally biased toward low complexity.

It belongs to the complex I 20 kDa subunit family. As to quaternary structure, NDH-1 is composed of 14 different subunits. Subunits NuoB, C, D, E, F, and G constitute the peripheral sector of the complex. It depends on [4Fe-4S] cluster as a cofactor.

It is found in the cell membrane. The enzyme catalyses a quinone + NADH + 5 H(+)(in) = a quinol + NAD(+) + 4 H(+)(out). NDH-1 shuttles electrons from NADH, via FMN and iron-sulfur (Fe-S) centers, to quinones in the respiratory chain. The immediate electron acceptor for the enzyme in this species is believed to be a menaquinone. Couples the redox reaction to proton translocation (for every two electrons transferred, four hydrogen ions are translocated across the cytoplasmic membrane), and thus conserves the redox energy in a proton gradient. In Frankia alni (strain DSM 45986 / CECT 9034 / ACN14a), this protein is NADH-quinone oxidoreductase subunit B.